A 118-amino-acid polypeptide reads, in one-letter code: Aspartate 1-decarboxylase (118 aa).

Ser25 (schiff-base intermediate with substrate; via pyruvic acid) is an active-site residue. Ser25 is modified (pyruvic acid (Ser)). A substrate-binding site is contributed by Thr57. Tyr58 serves as the catalytic Proton donor. 73–75 (GAA) contacts substrate.

It belongs to the PanD family. As to quaternary structure, heterooctamer of four alpha and four beta subunits. Requires pyruvate as cofactor. Post-translationally, is synthesized initially as an inactive proenzyme, which is activated by self-cleavage at a specific serine bond to produce a beta-subunit with a hydroxyl group at its C-terminus and an alpha-subunit with a pyruvoyl group at its N-terminus.

The protein localises to the cytoplasm. The enzyme catalyses L-aspartate + H(+) = beta-alanine + CO2. Its pathway is cofactor biosynthesis; (R)-pantothenate biosynthesis; beta-alanine from L-aspartate: step 1/1. Catalyzes the pyruvoyl-dependent decarboxylation of aspartate to produce beta-alanine. This chain is Aspartate 1-decarboxylase, found in Porphyromonas gingivalis (strain ATCC 33277 / DSM 20709 / CIP 103683 / JCM 12257 / NCTC 11834 / 2561).